We begin with the raw amino-acid sequence, 220 residues long: Probable L-serine dehydratase, beta chain (220 aa).

In terms of domain architecture, ACT spans 148-220; that stretch reads AILVVHNDKF…NIIQVTKIAD (73 aa).

The protein belongs to the iron-sulfur dependent L-serine dehydratase family. Heterodimer of an alpha chain and a beta chain. It depends on [4Fe-4S] cluster as a cofactor.

It carries out the reaction L-serine = pyruvate + NH4(+). The protein operates within carbohydrate biosynthesis; gluconeogenesis. This chain is Probable L-serine dehydratase, beta chain (sdaAB), found in Bacillus subtilis (strain 168).